Reading from the N-terminus, the 410-residue chain is Arginine deiminase (410 aa).

The active-site Amidino-cysteine intermediate is the cysteine 400.

Belongs to the arginine deiminase family.

The protein localises to the cytoplasm. It carries out the reaction L-arginine + H2O = L-citrulline + NH4(+). The protein operates within amino-acid degradation; L-arginine degradation via ADI pathway; carbamoyl phosphate from L-arginine: step 1/2. The chain is Arginine deiminase from Streptococcus agalactiae serotype III (strain NEM316).